Here is a 616-residue protein sequence, read N- to C-terminus: Dihydroxy-acid dehydratase (616 aa).

Asp-81 contacts Mg(2+). Position 122 (Cys-122) interacts with [2Fe-2S] cluster. Mg(2+) is bound by residues Asp-123 and Lys-124. N6-carboxylysine is present on Lys-124. [2Fe-2S] cluster is bound at residue Cys-195. Glu-491 contributes to the Mg(2+) binding site. Ser-517 (proton acceptor) is an active-site residue.

Belongs to the IlvD/Edd family. In terms of assembly, homodimer. Requires [2Fe-2S] cluster as cofactor. It depends on Mg(2+) as a cofactor.

The catalysed reaction is (2R)-2,3-dihydroxy-3-methylbutanoate = 3-methyl-2-oxobutanoate + H2O. It carries out the reaction (2R,3R)-2,3-dihydroxy-3-methylpentanoate = (S)-3-methyl-2-oxopentanoate + H2O. It functions in the pathway amino-acid biosynthesis; L-isoleucine biosynthesis; L-isoleucine from 2-oxobutanoate: step 3/4. Its pathway is amino-acid biosynthesis; L-valine biosynthesis; L-valine from pyruvate: step 3/4. Functionally, functions in the biosynthesis of branched-chain amino acids. Catalyzes the dehydration of (2R,3R)-2,3-dihydroxy-3-methylpentanoate (2,3-dihydroxy-3-methylvalerate) into 2-oxo-3-methylpentanoate (2-oxo-3-methylvalerate) and of (2R)-2,3-dihydroxy-3-methylbutanoate (2,3-dihydroxyisovalerate) into 2-oxo-3-methylbutanoate (2-oxoisovalerate), the penultimate precursor to L-isoleucine and L-valine, respectively. The chain is Dihydroxy-acid dehydratase from Escherichia coli (strain K12 / MC4100 / BW2952).